The following is a 620-amino-acid chain: 1-deoxy-D-xylulose-5-phosphate synthase (620 aa).

Thiamine diphosphate is bound by residues His80 and 121–123 (GHS). Asp152 provides a ligand contact to Mg(2+). Residues 153–154 (GA), Asn181, Tyr288, and Glu370 each bind thiamine diphosphate. Asn181 contacts Mg(2+).

The protein belongs to the transketolase family. DXPS subfamily. Homodimer. Requires Mg(2+) as cofactor. It depends on thiamine diphosphate as a cofactor.

The catalysed reaction is D-glyceraldehyde 3-phosphate + pyruvate + H(+) = 1-deoxy-D-xylulose 5-phosphate + CO2. It functions in the pathway metabolic intermediate biosynthesis; 1-deoxy-D-xylulose 5-phosphate biosynthesis; 1-deoxy-D-xylulose 5-phosphate from D-glyceraldehyde 3-phosphate and pyruvate: step 1/1. In terms of biological role, catalyzes the acyloin condensation reaction between C atoms 2 and 3 of pyruvate and glyceraldehyde 3-phosphate to yield 1-deoxy-D-xylulose-5-phosphate (DXP). The protein is 1-deoxy-D-xylulose-5-phosphate synthase of Shigella flexneri.